The sequence spans 545 residues: Membrane protein insertase YidC (545 aa).

A run of 4 helical transmembrane segments spans residues Ile-350–Tyr-370, Leu-424–Val-444, Ala-461–Leu-481, and Pro-498–Val-518.

It belongs to the OXA1/ALB3/YidC family. Type 1 subfamily. As to quaternary structure, interacts with the Sec translocase complex via SecD. Specifically interacts with transmembrane segments of nascent integral membrane proteins during membrane integration.

Its subcellular location is the cell inner membrane. Required for the insertion and/or proper folding and/or complex formation of integral membrane proteins into the membrane. Involved in integration of membrane proteins that insert both dependently and independently of the Sec translocase complex, as well as at least some lipoproteins. Aids folding of multispanning membrane proteins. The chain is Membrane protein insertase YidC from Neisseria gonorrhoeae (strain ATCC 700825 / FA 1090).